We begin with the raw amino-acid sequence, 254 residues long: Hydroxyacylglutathione hydrolase (254 aa).

Zn(2+)-binding residues include His-54, His-56, Asp-58, His-59, His-111, Asp-130, and His-168.

Belongs to the metallo-beta-lactamase superfamily. Glyoxalase II family. As to quaternary structure, monomer. It depends on Zn(2+) as a cofactor.

It catalyses the reaction an S-(2-hydroxyacyl)glutathione + H2O = a 2-hydroxy carboxylate + glutathione + H(+). It functions in the pathway secondary metabolite metabolism; methylglyoxal degradation; (R)-lactate from methylglyoxal: step 2/2. In terms of biological role, thiolesterase that catalyzes the hydrolysis of S-D-lactoyl-glutathione to form glutathione and D-lactic acid. This Legionella pneumophila (strain Corby) protein is Hydroxyacylglutathione hydrolase.